The sequence spans 310 residues: Probable endonuclease 4 (310 aa).

The disordered stretch occupies residues 1–31; that stretch reads MNNQQSRGALGTSGATPDLPDATPGLSRNPV. Zn(2+)-binding residues include histidine 94, histidine 134, glutamate 173, aspartate 207, histidine 210, histidine 244, aspartate 257, histidine 259, and glutamate 289.

This sequence belongs to the AP endonuclease 2 family. Zn(2+) serves as cofactor.

The enzyme catalyses Endonucleolytic cleavage to 5'-phosphooligonucleotide end-products.. Its function is as follows. Endonuclease IV plays a role in DNA repair. It cleaves phosphodiester bonds at apurinic or apyrimidinic (AP) sites, generating a 3'-hydroxyl group and a 5'-terminal sugar phosphate. This chain is Probable endonuclease 4, found in Streptomyces avermitilis (strain ATCC 31267 / DSM 46492 / JCM 5070 / NBRC 14893 / NCIMB 12804 / NRRL 8165 / MA-4680).